The sequence spans 817 residues: LPS-assembly protein LptD (817 aa).

Residues 1–26 (MPALVVSPDLVRGAAGASAAPTPAPA) form the signal peptide. Positions 1-101 (MPALVVSPDL…ARKPGSTEVR (101 aa)) are disordered. Low complexity predominate over residues 13-90 (GAAGASAAPT…PAASASPADA (78 aa)).

Belongs to the LptD family. Component of the lipopolysaccharide transport and assembly complex. Interacts with LptE and LptA.

It is found in the cell outer membrane. Its function is as follows. Together with LptE, is involved in the assembly of lipopolysaccharide (LPS) at the surface of the outer membrane. This chain is LPS-assembly protein LptD, found in Azoarcus sp. (strain BH72).